Here is a 101-residue protein sequence, read N- to C-terminus: Small ribosomal subunit protein uS14 (101 aa).

It belongs to the universal ribosomal protein uS14 family. In terms of assembly, part of the 30S ribosomal subunit. Contacts proteins S3 and S10.

Binds 16S rRNA, required for the assembly of 30S particles and may also be responsible for determining the conformation of the 16S rRNA at the A site. The protein is Small ribosomal subunit protein uS14 of Cupriavidus pinatubonensis (strain JMP 134 / LMG 1197) (Cupriavidus necator (strain JMP 134)).